The sequence spans 82 residues: Small ribosomal subunit protein bS18A (82 aa).

This sequence belongs to the bacterial ribosomal protein bS18 family. As to quaternary structure, part of the 30S ribosomal subunit. Forms a tight heterodimer with protein bS6.

In terms of biological role, binds as a heterodimer with protein bS6 to the central domain of the 16S rRNA, where it helps stabilize the platform of the 30S subunit. The protein is Small ribosomal subunit protein bS18A of Streptomyces griseus subsp. griseus (strain JCM 4626 / CBS 651.72 / NBRC 13350 / KCC S-0626 / ISP 5235).